Reading from the N-terminus, the 555-residue chain is GPI-anchor transamidase component PIGS (555 aa).

The Cytoplasmic segment spans residues 2–18 (ATAGAAATDLEVVRGKR). A cardiolipin-binding residues include Arg-15 and Arg-18. Residues 19–39 (AALFFAAVAILLGLPLWWKTT) traverse the membrane as a helical segment. Residues 40 to 517 (ETYRAPLPYS…LHLLYFPDDQ (478 aa)) are Lumenal-facing. Asn-267 and Asn-370 each carry an N-linked (GlcNAc...) asparagine glycan. Residues 518 to 532 (KFAIYIPLFLPMAVP) form a helical membrane-spanning segment. Over 533 to 555 (ILLSLVKIFLETHKSWKKPEKID) the chain is Cytoplasmic.

The protein belongs to the PIGS family. In terms of assembly, heteropentamer. Part of the GPI-anchor transamidase complex, consisting of PIGK, PIGT, PIGS, PIGU and GAA1.

The protein localises to the endoplasmic reticulum membrane. It participates in glycolipid biosynthesis; glycosylphosphatidylinositol-anchor biosynthesis. Component of the glycosylphosphatidylinositol-anchor (GPI-anchor) transamidase (GPI-T) complex that catalyzes the formation of the linkage between a proprotein and a GPI-anchor and participates in GPI anchored protein biosynthesis. This chain is GPI-anchor transamidase component PIGS, found in Rattus norvegicus (Rat).